A 281-amino-acid chain; its full sequence is Pantothenate synthetase (281 aa).

ATP is bound at residue methionine 30–histidine 37. Histidine 37 functions as the Proton donor in the catalytic mechanism. Glutamine 61 contributes to the (R)-pantoate binding site. Residue glutamine 61 participates in beta-alanine binding. Glycine 149–aspartate 152 contributes to the ATP binding site. Glutamine 155 provides a ligand contact to (R)-pantoate. ATP contacts are provided by residues isoleucine 178 and methionine 186–arginine 189.

The protein belongs to the pantothenate synthetase family. In terms of assembly, homodimer.

It localises to the cytoplasm. It carries out the reaction (R)-pantoate + beta-alanine + ATP = (R)-pantothenate + AMP + diphosphate + H(+). It participates in cofactor biosynthesis; (R)-pantothenate biosynthesis; (R)-pantothenate from (R)-pantoate and beta-alanine: step 1/1. Catalyzes the condensation of pantoate with beta-alanine in an ATP-dependent reaction via a pantoyl-adenylate intermediate. This is Pantothenate synthetase from Shewanella baltica (strain OS155 / ATCC BAA-1091).